The chain runs to 419 residues: MAPK/MAK/MRK overlapping kinase (419 aa).

A Protein kinase domain is found at 4-285 (YKAIGKIGEG…AHQALQHPYF (282 aa)). Residues 10–18 (IGEGTFSEV) and Lys33 contribute to the ATP site. Residue Asp128 is the Proton acceptor of the active site. 2 disordered regions span residues 285–344 (FQEQ…RGPA) and 390–419 (PASK…KGGR). Composition is skewed to basic and acidic residues over residues 322–338 (KEGR…EDRP) and 393–402 (KKTDPQKDLK).

This sequence belongs to the protein kinase superfamily. CMGC Ser/Thr protein kinase family. CDC2/CDKX subfamily. The cofactor is Mg(2+). Autophosphorylated. In terms of tissue distribution, expressed in heart, brain, lung, kidney, and pancreas, and at very low levels in placenta, liver and skeletal muscle. Detected in retina.

It localises to the cytoplasm. The protein resides in the cell projection. The protein localises to the cilium. Its subcellular location is the nucleus. It carries out the reaction L-seryl-[protein] + ATP = O-phospho-L-seryl-[protein] + ADP + H(+). The catalysed reaction is L-threonyl-[protein] + ATP = O-phospho-L-threonyl-[protein] + ADP + H(+). Its activity is regulated as follows. Phosphorylation appears to increase the enzymatic activity. Able to phosphorylate several exogenous substrates and to undergo autophosphorylation. Negatively regulates cilium length in a cAMP and mTORC1 signaling-dependent manner. This chain is MAPK/MAK/MRK overlapping kinase (MOK), found in Homo sapiens (Human).